The sequence spans 103 residues: UPF0145 protein Amet_0532 (103 aa).

The protein belongs to the UPF0145 family.

This Alkaliphilus metalliredigens (strain QYMF) protein is UPF0145 protein Amet_0532.